The following is a 55-amino-acid chain: Male-specific sperm protein Mst84Dc (55 aa).

Belongs to the MST(3)CGP family. In terms of tissue distribution, testis.

This Drosophila melanogaster (Fruit fly) protein is Male-specific sperm protein Mst84Dc (Mst84Dc).